A 474-amino-acid chain; its full sequence is Glutamate--tRNA ligase (474 aa).

The short motif at P9–G19 is the 'HIGH' region element. Positions K240–R244 match the 'KMSKS' region motif. K243 lines the ATP pocket.

Belongs to the class-I aminoacyl-tRNA synthetase family. Glutamate--tRNA ligase type 1 subfamily. As to quaternary structure, monomer.

It is found in the cytoplasm. It catalyses the reaction tRNA(Glu) + L-glutamate + ATP = L-glutamyl-tRNA(Glu) + AMP + diphosphate. Functionally, catalyzes the attachment of glutamate to tRNA(Glu) in a two-step reaction: glutamate is first activated by ATP to form Glu-AMP and then transferred to the acceptor end of tRNA(Glu). The polypeptide is Glutamate--tRNA ligase (Aliivibrio fischeri (strain MJ11) (Vibrio fischeri)).